We begin with the raw amino-acid sequence, 129 residues long: Large ribosomal subunit protein bL17 (129 aa).

The protein belongs to the bacterial ribosomal protein bL17 family. Part of the 50S ribosomal subunit. Contacts protein L32.

The polypeptide is Large ribosomal subunit protein bL17 (Buchnera aphidicola subsp. Baizongia pistaciae (strain Bp)).